Reading from the N-terminus, the 216-residue chain is uncharacterized protein (216 aa).

The signal sequence occupies residues 1 to 17 (MLKKIIILFLGMFLLSA). Cys18 carries N-palmitoyl cysteine lipidation. Cys18 is lipidated: S-diacylglycerol cysteine. Positions 133–162 (SDKEKKIQEELNQIKAMLRETKRDISKYTC) form a coiled coil.

The protein resides in the cell membrane. This is an uncharacterized protein from Rickettsia conorii (strain ATCC VR-613 / Malish 7).